The primary structure comprises 133 residues: ATP synthase epsilon chain, chloroplastic (133 aa).

Belongs to the ATPase epsilon chain family. As to quaternary structure, F-type ATPases have 2 components, CF(1) - the catalytic core - and CF(0) - the membrane proton channel. CF(1) has five subunits: alpha(3), beta(3), gamma(1), delta(1), epsilon(1). CF(0) has three main subunits: a, b and c.

The protein resides in the plastid. It is found in the chloroplast thylakoid membrane. In terms of biological role, produces ATP from ADP in the presence of a proton gradient across the membrane. This Daucus carota (Wild carrot) protein is ATP synthase epsilon chain, chloroplastic.